The chain runs to 328 residues: Carbonic anhydrase, chloroplastic (328 aa).

Residues 1–15 are compositionally biased toward low complexity; it reads MSTSSINGFSLSSLS. A disordered region spans residues 1–26; sequence MSTSSINGFSLSSLSPAKTSTKRTTL. Residues 1–70 constitute a chloroplast transit peptide; that stretch reads MSTSSINGFS…IITPVLREEM (70 aa).

It belongs to the beta-class carbonic anhydrase family. Homohexamer.

Its subcellular location is the plastid. It localises to the chloroplast stroma. The enzyme catalyses hydrogencarbonate + H(+) = CO2 + H2O. Reversible hydration of carbon dioxide. In Pisum sativum (Garden pea), this protein is Carbonic anhydrase, chloroplastic.